An 82-amino-acid chain; its full sequence is Cytochrome b-c1 complex subunit 8 (82 aa).

Residues 1 to 39 (MGREFGNLTRIRHVISYSLSPFEQRAFPHYFSKGIPNVL) are Mitochondrial matrix-facing. S16 is modified (phosphoserine). Residue K33 is modified to N6-acetyllysine; alternate. N6-succinyllysine; alternate is present on K33. Residues 40-68 (RRTRERILRVAPPFVLFYLIYTWGNQEFA) form a helical membrane-spanning segment. At 69-82 (QSKRKNPAKYENDK) the chain is on the mitochondrial intermembrane side.

The protein belongs to the UQCRQ/QCR8 family. Component of the ubiquinol-cytochrome c oxidoreductase (cytochrome b-c1 complex, complex III, CIII), a multisubunit enzyme composed of 11 subunits. The complex is composed of 3 respiratory subunits cytochrome b, cytochrome c1 and Rieske protein UQCRFS1, 2 core protein subunits UQCRC1/QCR1 and UQCRC2/QCR2, and 6 low-molecular weight protein subunits UQCRH/QCR6, UQCRB/QCR7, UQCRQ/QCR8, UQCR10/QCR9, UQCR11/QCR10 and subunit 9, the cleavage product of Rieske protein UQCRFS1. The complex exists as an obligatory dimer and forms supercomplexes (SCs) in the inner mitochondrial membrane with NADH-ubiquinone oxidoreductase (complex I, CI) and cytochrome c oxidase (complex IV, CIV), resulting in different assemblies (supercomplex SCI(1)III(2)IV(1) and megacomplex MCI(2)III(2)IV(2)). Interacts with UQCC6.

The protein resides in the mitochondrion inner membrane. In terms of biological role, component of the ubiquinol-cytochrome c oxidoreductase, a multisubunit transmembrane complex that is part of the mitochondrial electron transport chain which drives oxidative phosphorylation. The respiratory chain contains 3 multisubunit complexes succinate dehydrogenase (complex II, CII), ubiquinol-cytochrome c oxidoreductase (cytochrome b-c1 complex, complex III, CIII) and cytochrome c oxidase (complex IV, CIV), that cooperate to transfer electrons derived from NADH and succinate to molecular oxygen, creating an electrochemical gradient over the inner membrane that drives transmembrane transport and the ATP synthase. The cytochrome b-c1 complex catalyzes electron transfer from ubiquinol to cytochrome c, linking this redox reaction to translocation of protons across the mitochondrial inner membrane, with protons being carried across the membrane as hydrogens on the quinol. In the process called Q cycle, 2 protons are consumed from the matrix, 4 protons are released into the intermembrane space and 2 electrons are passed to cytochrome c. In Rattus norvegicus (Rat), this protein is Cytochrome b-c1 complex subunit 8 (Uqcrq).